Consider the following 561-residue polypeptide: Sesquiterpene synthase 2 (561 aa).

Mg(2+)-binding residues include aspartate 313, aspartate 317, aspartate 458, and glutamate 466. A DDXXD motif motif is present at residues 313–317 (DDIYD).

This sequence belongs to the terpene synthase family. Tpsa subfamily. It depends on Mn(2+) as a cofactor. Mg(2+) serves as cofactor.

It is found in the cytoplasm. The enzyme catalyses (2E,6E)-farnesyl diphosphate + H2O = kunzeaol + diphosphate. The protein operates within secondary metabolite biosynthesis; terpenoid biosynthesis. Involved in the biosynthesis of kunzeaol. Produces mainly (-)-germacrene D along with gamma-cadinene. The chain is Sesquiterpene synthase 2 (STS2) from Thapsia garganica (Deadly carrot).